We begin with the raw amino-acid sequence, 632 residues long: Signal-transduction and transcriptional-control protein (632 aa).

The PAS domain maps to 197-270; that stretch reads TYQYLNKITD…GQSYEDEEIM (74 aa). Residues 324–554 enclose the Sigma-54 factor interaction domain; it reads IIGQSEAMKR…LENCIENIVN (231 aa). ATP is bound by residues 352–359 and 416–425; these read GESGTGKE and ANEGTLFLDE. Positions 606 to 625 form a DNA-binding region, H-T-H motif; that stretch reads ISKACRILGINRSTLYIKIK.

This chain is Signal-transduction and transcriptional-control protein (stc), found in Clostridium beijerinckii (Clostridium MP).